Consider the following 84-residue polypeptide: Small ribosomal subunit protein uS17 (84 aa).

Belongs to the universal ribosomal protein uS17 family. Part of the 30S ribosomal subunit.

In terms of biological role, one of the primary rRNA binding proteins, it binds specifically to the 5'-end of 16S ribosomal RNA. In Sodalis glossinidius (strain morsitans), this protein is Small ribosomal subunit protein uS17.